A 261-amino-acid polypeptide reads, in one-letter code: Succinate dehydrogenase iron-sulfur subunit (261 aa).

The region spanning Arg28–Met119 is the 2Fe-2S ferredoxin-type domain. Residues Cys80, Cys85, and Cys100 each contribute to the [2Fe-2S] cluster site. In terms of domain architecture, 4Fe-4S ferredoxin-type spans Asp161–Tyr191. Positions 171, 174, and 177 each coordinate [4Fe-4S] cluster. Residue Cys181 coordinates [3Fe-4S] cluster. An a ubiquinone-binding site is contributed by Trp186. The [3Fe-4S] cluster site is built by Cys228 and Cys234. Cys238 provides a ligand contact to [4Fe-4S] cluster.

The protein belongs to the succinate dehydrogenase/fumarate reductase iron-sulfur protein family. Part of an enzyme complex containing four subunits: a flavoprotein, an iron-sulfur, cytochrome b-556, and a hydrophobic anchor protein. It depends on [2Fe-2S] cluster as a cofactor. [3Fe-4S] cluster serves as cofactor. The cofactor is [4Fe-4S] cluster.

It carries out the reaction a quinone + succinate = fumarate + a quinol. It functions in the pathway carbohydrate metabolism; tricarboxylic acid cycle; fumarate from succinate (bacterial route): step 1/1. In Rickettsia prowazekii (strain Madrid E), this protein is Succinate dehydrogenase iron-sulfur subunit (sdhB).